A 178-amino-acid polypeptide reads, in one-letter code: MRAYYFDNIPGDQRLPHDSGRPVSEDTLRKLNISYWRIELDGYLPKLNAVAEERGYKNRDFINVSKAGLGDSYEEKLKNFFSEHMHEDEEIRYVVDGSGFFDVRESPSDEWIRIGVEPGDLLVIPAGIYHRFTLDENNYIKAIRLFQDEPKWIPYNRSEETEVNPHRINYLREIGVGA.

Fe(2+)-binding residues include histidine 84, histidine 86, glutamate 90, and histidine 130. Histidine 84, histidine 86, glutamate 90, and histidine 130 together coordinate Ni(2+).

This sequence belongs to the acireductone dioxygenase (ARD) family. It depends on Fe(2+) as a cofactor. Ni(2+) serves as cofactor.

The protein localises to the cytoplasm. It is found in the nucleus. It catalyses the reaction 1,2-dihydroxy-5-(methylsulfanyl)pent-1-en-3-one + O2 = 4-methylsulfanyl-2-oxobutanoate + formate + 2 H(+). It carries out the reaction 1,2-dihydroxy-5-(methylsulfanyl)pent-1-en-3-one + O2 = 3-(methylsulfanyl)propanoate + CO + formate + 2 H(+). It participates in amino-acid biosynthesis; L-methionine biosynthesis via salvage pathway; L-methionine from S-methyl-5-thio-alpha-D-ribose 1-phosphate: step 5/6. Catalyzes 2 different reactions between oxygen and the acireductone 1,2-dihydroxy-3-keto-5-methylthiopentene (DHK-MTPene) depending upon the metal bound in the active site. Fe-containing acireductone dioxygenase (Fe-ARD) produces formate and 2-keto-4-methylthiobutyrate (KMTB), the alpha-ketoacid precursor of methionine in the methionine recycle pathway. Ni-containing acireductone dioxygenase (Ni-ARD) produces methylthiopropionate, carbon monoxide and formate, and does not lie on the methionine recycle pathway. This is Acireductone dioxygenase 1 from Coprinopsis cinerea (strain Okayama-7 / 130 / ATCC MYA-4618 / FGSC 9003) (Inky cap fungus).